The primary structure comprises 212 residues: Imidazole glycerol phosphate synthase subunit HisH (212 aa).

Residues 1–212 enclose the Glutamine amidotransferase type-1 domain; it reads MLAILDYKAG…YAYCKEASRA (212 aa). C79 acts as the Nucleophile in catalysis. Residues H187 and E189 contribute to the active site.

Heterodimer of HisH and HisF.

The protein resides in the cytoplasm. It catalyses the reaction 5-[(5-phospho-1-deoxy-D-ribulos-1-ylimino)methylamino]-1-(5-phospho-beta-D-ribosyl)imidazole-4-carboxamide + L-glutamine = D-erythro-1-(imidazol-4-yl)glycerol 3-phosphate + 5-amino-1-(5-phospho-beta-D-ribosyl)imidazole-4-carboxamide + L-glutamate + H(+). It carries out the reaction L-glutamine + H2O = L-glutamate + NH4(+). Its pathway is amino-acid biosynthesis; L-histidine biosynthesis; L-histidine from 5-phospho-alpha-D-ribose 1-diphosphate: step 5/9. Functionally, IGPS catalyzes the conversion of PRFAR and glutamine to IGP, AICAR and glutamate. The HisH subunit catalyzes the hydrolysis of glutamine to glutamate and ammonia as part of the synthesis of IGP and AICAR. The resulting ammonia molecule is channeled to the active site of HisF. In Nitratidesulfovibrio vulgaris (strain DSM 19637 / Miyazaki F) (Desulfovibrio vulgaris), this protein is Imidazole glycerol phosphate synthase subunit HisH.